The primary structure comprises 245 residues: Putative MSV199 domain-containing protein 146R (245 aa).

Residues 2-97 enclose the GIY-YIG domain; it reads RKGYIYVIEN…NTLHGKLKNL (96 aa).

This is Putative MSV199 domain-containing protein 146R from Acheta domesticus (House cricket).